We begin with the raw amino-acid sequence, 558 residues long: Polypeptide N-acetylgalactosaminyltransferase 16 (558 aa).

The Cytoplasmic segment spans residues 1 to 6 (MRKIRA). A helical; Signal-anchor for type II membrane protein membrane pass occupies residues 7–26 (NAIAILTVAWILGTFYYLWQ). At 27–558 (DNRAHAASSS…AQQWQLLPHT (532 aa)) the chain is on the lumenal side. Residues 34-46 (SSSGRGAQRAGGR) show a composition bias toward low complexity. Residues 34–53 (SSSGRGAQRAGGRPEQLRED) form a disordered region. 5 disulfides stabilise this stretch: Cys113–Cys340, Cys331–Cys409, Cys441–Cys460, Cys486–Cys506, and Cys530–Cys543. Residues 122–227 (LPATSVIITF…VEWLQPMLQR (106 aa)) form a catalytic subdomain A region. Positions 163 and 188 each coordinate substrate. Residue Asp211 coordinates Mn(2+). Ser212 contributes to the substrate binding site. Residue His213 participates in Mn(2+) binding. The tract at residues 286 to 348 (PIRTPVIAGG…PCSRVGHVFR (63 aa)) is catalytic subdomain B. Trp317 provides a ligand contact to substrate. His345 serves as a coordination point for Mn(2+). 3 residues coordinate substrate: Arg348, His351, and Tyr353. Residues 428–555 (KEVLPGVIKQ…DAQAQQWQLL (128 aa)) enclose the Ricin B-type lectin domain.

The protein belongs to the glycosyltransferase 2 family. GalNAc-T subfamily. Mn(2+) is required as a cofactor. In the CNS, it is predominantly expressed in several distinct hypothalamic, thalamic and amygdaloid nuclei. The most abundant level of expression is in the paraventricular, ventromedial and arcuate nuclei of the hypothalamus, the anterodorsal and parafascicular nuclei of the thalamus and the central, basomedial and medial nuclei of the amygdala. Also expressed in cerebral cortex, lateral septum, habenula and hippocampus.

Its subcellular location is the golgi apparatus membrane. The enzyme catalyses L-seryl-[protein] + UDP-N-acetyl-alpha-D-galactosamine = a 3-O-[N-acetyl-alpha-D-galactosaminyl]-L-seryl-[protein] + UDP + H(+). It catalyses the reaction L-threonyl-[protein] + UDP-N-acetyl-alpha-D-galactosamine = a 3-O-[N-acetyl-alpha-D-galactosaminyl]-L-threonyl-[protein] + UDP + H(+). Its pathway is protein modification; protein glycosylation. In terms of biological role, catalyzes the initial reaction in O-linked oligosaccharide biosynthesis, the transfer of an N-acetyl-D-galactosamine residue to a serine or threonine residue on the protein receptor. In Mus musculus (Mouse), this protein is Polypeptide N-acetylgalactosaminyltransferase 16 (Galnt16).